The following is a 297-amino-acid chain: Protease HtpX homolog (297 aa).

Residues 16–36 (IFMAIGFLVGGMAGMILAFVV) traverse the membrane as a helical segment. H134 contributes to the Zn(2+) binding site. E135 is an active-site residue. H138 lines the Zn(2+) pocket. The next 2 helical transmembrane spans lie at 147 to 167 (MTVTATLAGAIGMLANFALFF) and 175 to 195 (IGSIAIMIFAPMAAALVQMAI). E200 provides a ligand contact to Zn(2+).

Belongs to the peptidase M48B family. It depends on Zn(2+) as a cofactor.

Its subcellular location is the cell inner membrane. This chain is Protease HtpX homolog, found in Hyphomonas neptunium (strain ATCC 15444).